Here is a 351-residue protein sequence, read N- to C-terminus: Cytochrome c biogenesis protein CcsA (351 aa).

The next 8 membrane-spanning stretches (helical) occupy residues 17–37, 38–58, 68–88, 97–117, 143–163, 259–279, 286–306, and 320–340; these read VLFLTMLLYWIGAAFPGLPAI, NALGTAGMAIANLSIATLLGA, LSNLYESLFFLSWGITTVHLI, LVGVFTTPVAMGIVAFATLTL, MMLSYSALMVGSLLAIAFLVI, IIGLGFPLLTIGIIAGAVWAN, WSWDPKETWALITWLVFAAYL, and AILAASGFVVVWICYLGVNLL.

This sequence belongs to the CcmF/CycK/Ccl1/NrfE/CcsA family. As to quaternary structure, may interact with ccs1.

The protein localises to the cellular thylakoid membrane. Required during biogenesis of c-type cytochromes (cytochrome c6 and cytochrome f) at the step of heme attachment. The chain is Cytochrome c biogenesis protein CcsA from Trichormus variabilis (strain ATCC 29413 / PCC 7937) (Anabaena variabilis).